The primary structure comprises 194 residues: Peptidyl-tRNA hydrolase (194 aa).

Tyr17 lines the tRNA pocket. The active-site Proton acceptor is His22. TRNA is bound by residues Tyr68, Asn70, and Asn116.

This sequence belongs to the PTH family. As to quaternary structure, monomer.

It localises to the cytoplasm. The catalysed reaction is an N-acyl-L-alpha-aminoacyl-tRNA + H2O = an N-acyl-L-amino acid + a tRNA + H(+). Functionally, hydrolyzes ribosome-free peptidyl-tRNAs (with 1 or more amino acids incorporated), which drop off the ribosome during protein synthesis, or as a result of ribosome stalling. In terms of biological role, catalyzes the release of premature peptidyl moieties from peptidyl-tRNA molecules trapped in stalled 50S ribosomal subunits, and thus maintains levels of free tRNAs and 50S ribosomes. The protein is Peptidyl-tRNA hydrolase of Pseudoalteromonas translucida (strain TAC 125).